The primary structure comprises 357 residues: Thiamine thiazole synthase 3, chloroplastic (357 aa).

Residues 1–51 (MSISAAGVATGLGANVELKSNVGSSSSSVAGVRLFTSRKAQLRRCAAPATS) constitute a chloroplast transit peptide. Substrate contacts are provided by residues Ala103, 123–124 (EQ), Gly131, and Ala196. Cys225 carries the 2,3-didehydroalanine (Cys) modification. Residues Asp227, His242, Met294, and 304 to 306 (RMG) contribute to the substrate site.

This sequence belongs to the THI4 family. Homooctamer. Fe cation serves as cofactor. In terms of processing, during the catalytic reaction, a sulfide is transferred from Cys-225 to a reaction intermediate, generating a dehydroalanine residue.

Its subcellular location is the plastid. It is found in the chloroplast. The enzyme catalyses [ADP-thiazole synthase]-L-cysteine + glycine + NAD(+) = [ADP-thiazole synthase]-dehydroalanine + ADP-5-ethyl-4-methylthiazole-2-carboxylate + nicotinamide + 3 H2O + 2 H(+). In terms of biological role, involved in biosynthesis of the thiamine precursor thiazole. Catalyzes the conversion of NAD and glycine to adenosine diphosphate 5-(2-hydroxyethyl)-4-methylthiazole-2-carboxylic acid (ADT), an adenylated thiazole intermediate. The reaction includes an iron-dependent sulfide transfer from a conserved cysteine residue of the protein to a thiazole intermediate. The enzyme can only undergo a single turnover, which suggests it is a suicide enzyme. May have additional roles in adaptation to various stress conditions and in DNA damage tolerance. The polypeptide is Thiamine thiazole synthase 3, chloroplastic (Physcomitrium patens (Spreading-leaved earth moss)).